We begin with the raw amino-acid sequence, 364 residues long: GTPase Obg (364 aa).

The Obg domain occupies 1–159 (MKFLDEAKVY…KTIWLHLKLI (159 aa)). An OBG-type G domain is found at 160–327 (ADAGLVGLPN…VLRALRDIIV (168 aa)). Residues 166-173 (GLPNAGKS), 191-195 (FTTLH), 212-215 (DIPG), 279-282 (SQID), and 308-310 (SAV) each bind GTP. Mg(2+) is bound by residues S173 and T193. Positions 333–364 (EKPAKVPKLRHRDMVVTDEGEDKGGDEGDDQP) are disordered.

Belongs to the TRAFAC class OBG-HflX-like GTPase superfamily. OBG GTPase family. In terms of assembly, monomer. The cofactor is Mg(2+).

It is found in the cytoplasm. In terms of biological role, an essential GTPase which binds GTP, GDP and possibly (p)ppGpp with moderate affinity, with high nucleotide exchange rates and a fairly low GTP hydrolysis rate. Plays a role in control of the cell cycle, stress response, ribosome biogenesis and in those bacteria that undergo differentiation, in morphogenesis control. In Rhizobium johnstonii (strain DSM 114642 / LMG 32736 / 3841) (Rhizobium leguminosarum bv. viciae), this protein is GTPase Obg.